Consider the following 488-residue polypeptide: Glutamate--tRNA ligase (488 aa).

The 'HIGH' region motif lies at 16–26; sequence PSPTGEPHVGT. Positions 257–261 match the 'KMSKS' region motif; that stretch reads KLSKR. Lys260 is a binding site for ATP.

The protein belongs to the class-I aminoacyl-tRNA synthetase family. Glutamate--tRNA ligase type 1 subfamily. As to quaternary structure, monomer.

It localises to the cytoplasm. It catalyses the reaction tRNA(Glu) + L-glutamate + ATP = L-glutamyl-tRNA(Glu) + AMP + diphosphate. Catalyzes the attachment of glutamate to tRNA(Glu) in a two-step reaction: glutamate is first activated by ATP to form Glu-AMP and then transferred to the acceptor end of tRNA(Glu). This Rhizobium etli (strain ATCC 51251 / DSM 11541 / JCM 21823 / NBRC 15573 / CFN 42) protein is Glutamate--tRNA ligase.